The chain runs to 192 residues: MLLAEEFAESALHRRVLFHAAAGRAGAEGGPSLPRLPCSGLDSAPSPRGPLPGHAPRRPPRPRTGRQVLGAPPLSEKCELPGQDSQKSSVPSHGPKTPSGQKVKAPHRPLSLSWKQDREQTLAAAYVPVVVDPRGQNPEKLRFNFYTSQYSNSLNPFYTLQKPTCGYLYRRDTDHTRKRFDVPPANLVLWRS.

The interval 24 to 108 (RAGAEGGPSL…SGQKVKAPHR (85 aa)) is disordered. Residues 55-64 (APRRPPRPRT) are compositionally biased toward basic residues.

Belongs to the CIMIP3-like family. As to expression, detected in the sperm flagellum (at protein level).

It is found in the cytoplasm. The protein resides in the cytoskeleton. Its subcellular location is the flagellum axoneme. In Bos taurus (Bovine), this protein is Ciliary microtubule inner protein 3.